The primary structure comprises 155 residues: Ribonuclease H (155 aa).

Positions 4–145 (ETKVIEIYTD…ADALARKAIT (142 aa)) constitute an RNase H type-1 domain. Mg(2+) is bound by residues D13, E51, D73, and D137.

The protein belongs to the RNase H family. As to quaternary structure, monomer. It depends on Mg(2+) as a cofactor.

It localises to the cytoplasm. It catalyses the reaction Endonucleolytic cleavage to 5'-phosphomonoester.. Its function is as follows. Endonuclease that specifically degrades the RNA of RNA-DNA hybrids. This is Ribonuclease H from Bartonella bacilliformis (strain ATCC 35685 / KC583 / Herrer 020/F12,63).